The following is a 256-amino-acid chain: 6-carboxyhexanoate--CoA ligase (256 aa).

The protein belongs to the BioW family. As to quaternary structure, homodimer. Mg(2+) serves as cofactor.

The enzyme catalyses heptanedioate + ATP + CoA = 6-carboxyhexanoyl-CoA + AMP + diphosphate. The protein operates within metabolic intermediate metabolism; pimeloyl-CoA biosynthesis; pimeloyl-CoA from pimelate: step 1/1. In terms of biological role, catalyzes the transformation of pimelate into pimeloyl-CoA with concomitant hydrolysis of ATP to AMP. The protein is 6-carboxyhexanoate--CoA ligase of Bacillus velezensis (strain DSM 23117 / BGSC 10A6 / LMG 26770 / FZB42) (Bacillus amyloliquefaciens subsp. plantarum).